Here is a 307-residue protein sequence, read N- to C-terminus: tRNA pseudouridine synthase B (307 aa).

Asp-48 (nucleophile) is an active-site residue.

The protein belongs to the pseudouridine synthase TruB family. Type 1 subfamily.

It catalyses the reaction uridine(55) in tRNA = pseudouridine(55) in tRNA. Responsible for synthesis of pseudouridine from uracil-55 in the psi GC loop of transfer RNAs. The chain is tRNA pseudouridine synthase B from Pasteurella multocida (strain Pm70).